A 125-amino-acid polypeptide reads, in one-letter code: Egg cell-secreted protein 1.2 (125 aa).

The N-terminal stretch at 1-22 (MASNTSFLFATIAILLVLNISG) is a signal peptide.

Belongs to the plant egg cell-secreted peptide family. As to expression, restricted to female reproductive tissues, specifically accumulating in storage vesicles of the unfertilized egg cell.

The protein localises to the cytoplasmic vesicle. It localises to the secreted. In terms of biological role, involved in the regulation of gamete interactions during the double fertilization and to prevent multiple-pollen tube attraction; mediates the redistribution of the gamete fusogen HAP2/GCS1 to the cell surface after secretion upon sperm arrival. The protein is Egg cell-secreted protein 1.2 (EC1.2) of Arabidopsis thaliana (Mouse-ear cress).